We begin with the raw amino-acid sequence, 58 residues long: Large ribosomal subunit protein uL24 (58 aa).

The protein belongs to the universal ribosomal protein uL24 family. As to quaternary structure, part of the 50S ribosomal subunit.

One of two assembly initiator proteins, it binds directly to the 5'-end of the 23S rRNA, where it nucleates assembly of the 50S subunit. In terms of biological role, one of the proteins that surrounds the polypeptide exit tunnel on the outside of the subunit. This chain is Large ribosomal subunit protein uL24 (rplX), found in Spiroplasma citri.